Consider the following 1891-residue polypeptide: TATA-binding protein-associated factor mot1 (1891 aa).

The HEAT 1 repeat unit spans residues 30 to 68 (PDELFNLLGRILPYLRSKSWDTRAAAAKAIGLIVANADT). Disordered regions lie at residues 184–216 (FVAS…LSKR), 241–283 (LSSR…LDRS), and 295–316 (FKGA…EGPN). Residues 264–275 (ENGEERNGDSKP) are compositionally biased toward basic and acidic residues. HEAT repeat units lie at residues 473–511 (SKLM…EFVK) and 569–606 (SSFG…LEGE). Residues 699–710 (SAAAPARSSPAS) show a composition bias toward low complexity. Residues 699–740 (SAAAPARSSPASNTPEGTKGRRRKSEKKEAPPPSAHNVDGHM) form a disordered region. 4 HEAT repeats span residues 957–996 (PKKP…YYTT), 1139–1177 (YPWV…VITV), 1181–1216 (TMLV…VMED), and 1219–1257 (LPYV…LVPL). Positions 1316–1489 (AFLNRYNLHG…WSLFDFLMPG (174 aa)) constitute a Helicase ATP-binding domain. 1329–1336 (DDMGLGKT) contributes to the ATP binding site. The DEAH box signature appears at 1440-1443 (DEGH). An HEAT 8 repeat occupies 1526-1565 (EALHKQVLPFLLRRLKEEVLNDLPPKIIQNYYCDPSELQR). The region spanning 1663–1813 (DLSGASYVSP…STVVNQQNAG (151 aa)) is the Helicase C-terminal domain.

The protein belongs to the SNF2/RAD54 helicase family. In terms of assembly, forms the NCT transcriptional regulatory complex with nctA and nctB.

It is found in the nucleus. Functionally, regulates transcription in association with TATA binding protein (TBP). Removes TBP from the TATA box via its C-terminal ATPase activity. Both transcription activation and repression require its ATPase activity. Part of the NCT transcriptional regulatory complex that acts as a key regulator of ergosterol biosynthesis and the azole exporter cdr1B. The NCT complex binds the promoters of genes linked to azole susceptibility, and especially represses the expression of cdr1B transporter. This is TATA-binding protein-associated factor mot1 from Aspergillus fumigatus (strain CBS 144.89 / FGSC A1163 / CEA10) (Neosartorya fumigata).